We begin with the raw amino-acid sequence, 508 residues long: Light-independent protochlorophyllide reductase subunit B (508 aa).

Asp36 provides a ligand contact to [4Fe-4S] cluster. Asp294 (proton donor) is an active-site residue. A substrate-binding site is contributed by 429–430; it reads GM.

It belongs to the ChlB/BchB/BchZ family. Protochlorophyllide reductase is composed of three subunits; ChlL, ChlN and ChlB. Forms a heterotetramer of two ChlB and two ChlN subunits. It depends on [4Fe-4S] cluster as a cofactor.

It catalyses the reaction chlorophyllide a + oxidized 2[4Fe-4S]-[ferredoxin] + 2 ADP + 2 phosphate = protochlorophyllide a + reduced 2[4Fe-4S]-[ferredoxin] + 2 ATP + 2 H2O. It participates in porphyrin-containing compound metabolism; chlorophyll biosynthesis (light-independent). In terms of biological role, component of the dark-operative protochlorophyllide reductase (DPOR) that uses Mg-ATP and reduced ferredoxin to reduce ring D of protochlorophyllide (Pchlide) to form chlorophyllide a (Chlide). This reaction is light-independent. The NB-protein (ChlN-ChlB) is the catalytic component of the complex. The sequence is that of Light-independent protochlorophyllide reductase subunit B from Nostoc punctiforme (strain ATCC 29133 / PCC 73102).